Consider the following 147-residue polypeptide: Hemoglobin subunit beta (147 aa).

One can recognise a Globin domain in the interval 3 to 147 (HWSCEEKQFI…VAHALALGYH (145 aa)). Residues His-64 and His-93 each coordinate heme b.

Belongs to the globin family. Heterotetramer of two alpha-D chains and two beta chains. Red blood cells.

In terms of biological role, involved in oxygen transport from the lung to the various peripheral tissues. This chain is Hemoglobin subunit beta (HBB), found in Chelonoidis carbonarius (Red-footed tortoise).